We begin with the raw amino-acid sequence, 4545 residues long: MLTPPLLLLLPLLSALVAGATMDAPKTCSPKQFACRDQITCISKGWRCDGERDCPDGSDEAPEICPQSKAQRCPPNEHSCLGTELCVPMSRLCNGIQDCMDGSDEGAHCRELRVNCSRMGCQHHCVPTPSGPTCYCNNSFQLQADGKTCKDFDECSVYGTCSQLCTNTDGSFTCGCVEGYLLQPDNRSCKAKNEPVDRPPVLLIANSQNILATYLSGAQVSTITPTSTRQTTAMDFSYANETVCWVHVGDSAAQTQLKCARMPSLKGFVDEHTINISLSLHHVEQMAIDWLTGNFYFVDDIDDRIFVCNRNGDTCVTLLDLELYNPKGIALDPAMGKVFFTDYGQIPKVERCDMDGQNRTKLVDSKIVFPHGITLDLVSRLVYWADAYLDYIEVVDYEGKGRQTIIQGILIEHLYGLTVFENYLYATNSDNANTQQKTSVIRVNRFNSTEYQVVTRVDKGGALHIYHQRRQPRVRSHACENDQYGKPGGCSDICLLANSHKARTCRCRSGFSLGSDGKSCKKPEHELFLVYGKGRPGIIRGMDMGAKVPDEHMIPIENLMNPRALDFHAETGFIYFADTTSYLIGRQKIDGTERETILKDGIHNVEGVAVDWMGDNLYWTDDGPKKTISVARLEKAAQTRKTLIEGKMTHPRAIVVDPLNGWMYWTDWEEDPKDSRRGRLERAWMDGSHRDIFVTSKTVLWPNGLSLDIPAGRLYWVDAFYDRIETILLNGTDRKIVYEGPELNHAFGLCHHGNYLFWTEYRSGSVYRLERGVAGAQPTVTLLRSERPPIFEIRMYDAQQQQVGTNKCRVNNGGCSSLCLATPGSRQCACAEDQVLDADGVTCLANPSYVPPPQCQPGEFACANNRCIQERWKCDGDNDCLDNSDEAPALCHQHTCPSDRFKCENNRCIPNRWLCDGDNDCGNSEDESNATCSARTCPPNQFSCASGRCIPISWTCDLDDDCGDRSDESASCAYPTCFPLTQFTCNNGRCININWRCDNDNDCGDNSDEAGCSHSCSSTQFKCNSGRCIPEHWTCDGDNDCGDYSDETHANCTNQATRPPGGCHSDEFQCRLDGLCIPLRWRCDGDTDCMDSSDEKGCEGVTHVCDPNVKFGCKDSARCISKAWVCDGDSDCEDNSDEENCEALACRPPSHPCANNTSVCLSPDKLCDGKDDCGDGSDEGELCDQCSLNNGGCSHNCSVAPGEGIVCSCPLGMELGPDNHTCQIQSYCAKHLKCSQKCDQNKFSVKCSCYEGWVLEPDGESCRSLDPFKPFIIFSNRHEIRRIDLHKGDYSVLVPGLRNTIALDFHLSQSALYWTDVVEDKIYRGKLLDNGALTSFEVVIQYGLATPEGLAVDWIAGNIYWVESNLDQIEVAKLDGTLRTTLLAGDIEHPRAIALDPRDGILFWTDWDASLPRIEAASMSGAGRRTIHRETGSGGWPNGLTVDYLEKRILWIDARSDAIYSARYDGSGHMEVLRGHEFLSHPFAVTLYGGEVYWTDWRTNTLAKANKWTGHNVTVVQRTNTQPFDLQVYHPSRQPMAPNPCEANGGRGPCSHLCLINYNRTVSCACPHLMKLHNDNTTCYEFKKFLLYARQMEIRGVDLDAPYYNYIISFTVPDIDNVTVLDYDAREQRVYWSDVRTQAIKRAFINGTGVETVVSADLPNAHGLAVDWVSRNLFWTSYDTNKKQINVARLDGSFKNAVVQGLEQPHGLVVHPLRGKLYWTDGDNISMVNMDGSNRTLLFSGQKGPVGLAIDFPESKLYWISSGNHTINRCNLDGSELEVIDTMRSQLGKATALAIMGDKLWWADQVSEKMGTCNKADGSGSVVLRNSTTLVMHMKVYDESIQLEHEGTNPCSVNNGDCSQLCLPTSETTRSCMCTAGYSLRSGQQACEGVGSFLLYSVHEGIRGIPLDPNDKSDALVPVSGTSLAVGIDFHAENDTIYWVDMGLSTISRAKRDQTWREDVVTNGIGRVEGIAVDWIAGNIYWTDQGFDVIEVARLNGSFRYVVISQGLDKPRAITVHPEKGYLFWTEWGHYPRIERSRLDGTERVVLVNVSISWPNGISVDYQGGKLYWCDARMDKIERIDLETGENREVVLSSNNMDMFSVSVFEDFIYWSDRTHANGSIKRGCKDNATDSVPLRTGIGVQLKDIKVFNRDRQKGTNVCAVANGGCQQLCLYRGGGQRACACAHGMLAEDGASCREYAGYLLYSERTILKSIHLSDERNLNAPVQPFEDPEHMKNVIALAFDYRAGTSPGTPNRIFFSDIHFGNIQQINDDGSGRTTIVENVGSVEGLAYHRGWDTLYWTSYTTSTITRHTVDQTRPGAFERETVITMSGDDHPRAFVLDECQNLMFWTNWNELHPSIMRAALSGANVLTLIEKDIRTPNGLAIDHRAEKLYFSDATLDKIERCEYDGSHRYVILKSEPVHPFGLAVYGEHIFWTDWVRRAVQRANKYVGSDMKLLRVDIPQQPMGIIAVANDTNSCELSPCRINNGGCQDLCLLTHQGHVNCSCRGGRILQEDFTCRAMNSSCRAQDEFECANGECISFSLTCDGVSHCKDKSDEKPSYCNSRRCKKTFRQCNNGRCVSNMLWCNGVDDCGDGSDEIPCNKTACGVGEFRCRDGSCIGNSSRCNQFVDCEDASDEMNCSATDCSSYFRLGVKGVLFQPCERTSLCYAPSWVCDGANDCGDYSDERDCPGVKRPRCPLNYFACPSGRCIPMSWTCDKEDDCENGEDETHCNKFCSEAQFECQNHRCISKQWLCDGSDDCGDGSDEAAHCEGKTCGPSSFSCPGTHVCVPERWLCDGDKDCADGADESISAGCLYNSTCDDREFMCQNRLCIPKHFVCDHDRDCADGSDESPECEYPTCGPNEFRCANGRCLSSRQWECDGENDCHDHSDEAPKNPHCTSPEHKCNASSQFLCSSGRCVAEALLCNGQDDCGDGSDERGCHVNECLSRKLSGCSQDCEDLKIGFKCRCRPGFRLKDDGRTCADVDECSTTFPCSQLCINTHGSYKCLCVEGYAPRGGDPHSCKAVTDEEPFLIFANRYYLRKLNLDGSNYTLLKQGLNNAVALDFDYRGQMIYWTDVTTQGSMIRRMHLNGSNVQVLHRTGLSNPDGLAVDWVGGNLYWCDKGRDTIEVSKLNGAYRTVLVSSGLREPRALVVDVQNGYLYWTDWGDHSLIGRIGMDGSGRSIIVDTKITWPNGLTVDYVTERIYWADAREDYIEFASLDGSNRHVVLSQDIPHIFALTLFEDYVYWTDWETKSINRAHKTTGANKTLLISTLHRPMDLHVFHALRQPDVPNHPCKVNNGGCSNLCLLSPGGGHKCACPTNFYLGGDGRTCVSNCTASQFVCKNDKCIPFWWKCDTEDDCGDHSDEPPDCPEFKCRPGQFQCSTGICTNPAFICDGDNDCQDNSDEANCDIHVCLPSQFKCTNTNRCIPGIFRCNGQDNCGDGEDERDCPEVTCAPNQFQCSITKRCIPRVWVCDRDNDCVDGSDEPANCTQMTCGVDEFRCKDSGRCIPARWKCDGEDDCGDGSDEPKEECDERTCEPYQFRCKNNRCVPGRWQCDYDNDCGDNSDEESCTPRPCSESEFSCANGRCIAGRWKCDGDHDCADGSDEKDCTPRCDMDQFQCKSGHCIPLRWRCDADADCMDGSDEEACGTGVRTCPLDEFQCNNTLCKPLAWKCDGEDDCGDNSDENPEECTRFQCPPNRPFRCKNDRVCLWIGRQCDGTDNCGDGTDEEDCEPPTAQNPHCKDKKEFLCRNQRCLSSSLRCNMFDDCGDGSDEEDCSIDPKLTSCATNASMCGDEARCVRTEKAAYCACRPGFHTVPGQPGCQDINECLRFGTCSQLCNNTKGGHLCSCARNFMKTHNTCKAEGSEYQVLYIADDNEIRSLFPGHPHSAYEQAFQGDESVRIDAMDVHVKAGRVYWTNWHTGTISYRSLPPAAPPTTSNRHRRQIDRGVTHLNISGLKMPRGIAIDWVAGNVYWTDSGRDVIEVAQMKGENRKTLISGMIDEPHAIVVDPLRGTMYWSDWGNHPKIETAAMDGTLRETLVQDNIQWPTGLAVDYHNERLYWADAKLSVIGSIRLNGTDPIVAVDSKRGLSHPFSIDVFEDYIYGVTYINNRVFKIHKFGHSPLINLTGGLSHASDVVLYHQHKQPEVTNPCDRKKCEWLCLLSPSGPVCTCPNGKRLDNGTCVPVPSPTPPPDAPRPGTCTLQCFNGGSCFLNARRQPKCRCQPRYTGDKCELDQCWEYCHNGGTCAASPSGMPTCRCPTGFTGPRCTQQVCAGYCANNSTCTVNQGNQPQCRCLPGFLGDRCQYRQCSGFCENFGTCQMAADGSRQCRCTVYFEGTRCEVNKCSRCLQGACVVNKQTGDVTCNCTDGRVAPSCLTCIDHCSNGGSCTMNSKMMPECQCPPHMTGPRCEEQVVSQQQPGHMTSILIPLLLLLLLLLVAGVVFWYKRRVRGAKGFQHQRMTNGAMNVEIGNPTYKMYEGGEPDDVGGLLDADFALDPDKPTNFTNPVYATLYMGGHGSRHSLASTDEKRELLGRGPEDEIGDPLA.

The first 19 residues, 1–19 (MLTPPLLLLLPLLSALVAG), serve as a signal peptide directing secretion. The Extracellular segment spans residues 20-4424 (ATMDAPKTCS…SQQQPGHMTS (4405 aa)). LDL-receptor class A domains lie at 27–66 (TCSP…EICP) and 72–110 (RCPP…AHCR). Disulfide bonds link Cys28–Cys41, Cys35–Cys54, Cys48–Cys65, Cys73–Cys86, Cys80–Cys99, and Cys93–Cys109. Residues Asn115, Asn137, Asn186, Asn240, and Asn275 are each glycosylated (N-linked (GlcNAc...) asparagine). LDL-receptor class B repeat units lie at residues 293–335 (GNFY…DPAM), 336–379 (GKVF…DLVS), and 380–423 (RLVY…FENY). An N-linked (GlcNAc...) asparagine glycan is attached at Asn358. An N-linked (GlcNAc...) asparagine glycan is attached at Asn447. LDL-receptor class B repeat units follow at residues 572 to 614 (GFIY…DWMG), 615 to 660 (DNLY…DPLN), 661 to 711 (GWMY…DIPA), and 712 to 755 (GRLY…HGNY). One copy of the HAT 1 repeat lies at 639-671 (TRKTLIEGKMTHPRAIVVDPLNGWMYWTDWEED). An N-linked (GlcNAc...) asparagine glycan is attached at Asn730. LDL-receptor class A domains follow at residues 854–892 (QCQP…ALCH), 895–933 (TCPS…ATCS), 936–973 (TCPP…ASCA), 976–1013 (TCFP…AGCS), 1015–1053 (SCSS…ANCT), 1062–1099 (GCHS…KGCE), 1104–1142 (VCDP…ENCE), and 1145–1184 (ACRP…ELCD). Intrachain disulfides connect Cys855–Cys867, Cys862–Cys880, Cys874–Cys891, Cys896–Cys908, Cys903–Cys921, Cys915–Cys932, Cys937–Cys949, Cys944–Cys962, Cys956–Cys972, Cys977–Cys990, Cys985–Cys1003, Cys997–Cys1012, Cys1016–Cys1028, Cys1023–Cys1041, Cys1035–Cys1052, Cys1063–Cys1076, Cys1070–Cys1089, Cys1083–Cys1098, Cys1105–Cys1119, Cys1113–Cys1132, Cys1126–Cys1141, Cys1146–Cys1160, Cys1153–Cys1173, and Cys1167–Cys1183. Ca(2+)-binding residues include Trp872, Asp875, Asp877, Asp879, Asp885, and Glu886. N-linked (GlcNAc...) asparagine glycosylation is present at Asn929. Ca(2+) contacts are provided by Trp1033, Asp1036, Asp1038, Asp1040, Asp1046, and Glu1047. Asn1051 is a glycosylation site (N-linked (GlcNAc...) asparagine). The Ca(2+) site is built by Trp1081, Asp1084, Asp1086, Asp1088, Asp1094, and Glu1095. Asn1156 is a glycosylation site (N-linked (GlcNAc...) asparagine). N-linked (GlcNAc...) asparagine glycans are attached at residues Asn1196 and Asn1219. LDL-receptor class B repeat units follow at residues 1310 to 1356 (SALY…DWIA), 1357 to 1399 (GNIY…DPRD), 1400 to 1446 (GILF…DYLE), 1447 to 1491 (KRIL…YGGE), and 1492 to 1532 (VYWT…YHPS). 2 HAT repeats span residues 1380–1413 (TTLL…SLPR) and 1470–1503 (MEVL…NTLA). N-linked (GlcNAc...) asparagine glycosylation is found at Asn1512, Asn1559, Asn1576, Asn1617, and Asn1646. LDL-receptor class B repeat units lie at residues 1628 to 1670 (QRVY…DWVS), 1671 to 1714 (RNLF…HPLR), 1715 to 1754 (GKLY…DFPE), and 1755 to 1799 (SKLY…MGDK). One copy of the HAT 4 repeat lies at 1653–1684 (VVSADLPNAHGLAVDWVSRNLFWTSYDTNKKQ). N-linked (GlcNAc...) asparagine glycosylation is found at Asn1724, Asn1734, Asn1764, Asn1826, and Asn1934. 4 LDL-receptor class B repeats span residues 1935–1977 (DTIY…DWIA), 1978–2020 (GNIY…HPEK), 2021–2064 (GYLF…DYQG), and 2065–2108 (GKLY…FEDF). The N-linked (GlcNAc...) asparagine glycan is linked to Asn1996. At Lys2010 the chain carries N6-acetyllysine. Asn2049 carries N-linked (GlcNAc...) asparagine glycosylation. N-linked (GlcNAc...) asparagine glycans are attached at residues Asn2118 and Asn2128. 5 LDL-receptor class B repeats span residues 2254-2295 (NRIF…HRGW), 2296-2344 (DTLY…DECQ), 2345-2389 (NLMF…DHRA), 2390-2432 (EKLY…YGEH), and 2433-2474 (IFWT…VAND). HAT repeat units follow at residues 2277 to 2309 (TTIV…STIT), 2325 to 2358 (TVIT…LHPS), and 2411 to 2444 (HRYV…RAVQ). Asn2473, Asn2503, and Asn2522 each carry an N-linked (GlcNAc...) asparagine glycan. LDL-receptor class A domains are found at residues 2524–2563 (SCRA…SYCN), 2566–2602 (RCKK…IPCN), 2605–2641 (ACGV…MNCS), 2639–2690 (NCSA…RDCP), 2696–2732 (RCPL…THCN), 2734–2771 (FCSE…AHCE), and 2774–2814 (TCGP…AGCL). Cystine bridges form between Cys2525-Cys2538, Cys2533-Cys2551, Cys2545-Cys2562, Cys2567-Cys2579, Cys2574-Cys2592, and Cys2586-Cys2601. N-linked (GlcNAc...) asparagine glycosylation is present at Asn2602. Cystine bridges form between Cys2606/Cys2618, Cys2613/Cys2631, Cys2625/Cys2640, Cys2640/Cys2667, Cys2645/Cys2680, Cys2674/Cys2689, Cys2697/Cys2709, Cys2704/Cys2722, Cys2716/Cys2731, Cys2735/Cys2747, Cys2742/Cys2760, Cys2754/Cys2770, Cys2775/Cys2788, Cys2782/Cys2801, and Cys2795/Cys2813. N-linked (GlcNAc...) asparagine glycosylation is found at Asn2621 and Asn2639. N-linked (GlcNAc...) asparagine glycosylation is present at Asn2816. LDL-receptor class A domains follow at residues 2818 to 2855 (TCDD…PECE), 2858 to 2899 (TCGP…PHCT), and 2904 to 2941 (KCNA…RGCH). 11 cysteine pairs are disulfide-bonded: Cys2819/Cys2831, Cys2826/Cys2844, Cys2838/Cys2854, Cys2859/Cys2871, Cys2866/Cys2885, Cys2879/Cys2898, Cys2905/Cys2918, Cys2913/Cys2931, Cys2925/Cys2940, Cys2987/Cys2997, and Cys2993/Cys3006. Asn2906 carries an N-linked (GlcNAc...) asparagine glycan. The region spanning 2983-3018 (DVDECSTTFPCSQLCINTHGSYKCLCVEGYAPRGGD) is the EGF-like 1; calcium-binding domain. Asn3049 and Asn3090 each carry an N-linked (GlcNAc...) asparagine glycan. 5 LDL-receptor class B repeats span residues 3070–3114 (QMIY…DWVG), 3115–3157 (GNLY…DVQN), 3158–3201 (GYLY…DYVT), 3202–3244 (ERIY…FEDY), and 3245–3285 (VYWT…FHAL). 2 HAT repeats span residues 3128 to 3171 (EVSK…HSLI) and 3224 to 3256 (RHVV…KSIN). N-linked (GlcNAc...) asparagine glycosylation is found at Asn3265 and Asn3334. 11 consecutive LDL-receptor class A domains span residues 3334-3371 (NCTA…PDCP), 3374-3410 (KCRP…ANCD), 3413-3450 (VCLP…RDCP), 3453-3491 (TCAP…ANCT), 3494-3533 (TCGV…EECD), 3536-3572 (TCEP…ESCT), 3575-3611 (PCSE…KDCT), 3613-3649 (RCDM…EACG), 3654-3692 (TCPL…EECT), 3695-3733 (QCPP…EDCE), and 3741-3778 (HCKD…EDCS). 33 disulfides stabilise this stretch: Cys3335–Cys3347, Cys3342–Cys3360, Cys3354–Cys3370, Cys3375–Cys3387, Cys3382–Cys3400, Cys3394–Cys3409, Cys3414–Cys3427, Cys3421–Cys3440, Cys3434–Cys3449, Cys3454–Cys3467, Cys3461–Cys3480, Cys3474–Cys3490, Cys3495–Cys3508, Cys3502–Cys3521, Cys3515–Cys3532, Cys3537–Cys3549, Cys3544–Cys3562, Cys3556–Cys3571, Cys3576–Cys3588, Cys3583–Cys3601, Cys3595–Cys3610, Cys3614–Cys3626, Cys3621–Cys3639, Cys3633–Cys3648, Cys3655–Cys3667, Cys3662–Cys3680, Cys3674–Cys3691, Cys3696–Cys3710, Cys3704–Cys3723, Cys3717–Cys3732, Cys3742–Cys3755, Cys3750–Cys3768, and Cys3762–Cys3777. Asn3489 carries N-linked (GlcNAc...) asparagine glycosylation. A glycan (N-linked (GlcNAc...) asparagine) is linked at Asn3663. Residues Asn3789 and Asn3840 are each glycosylated (N-linked (GlcNAc...) asparagine). The LDL-receptor class B 31 repeat unit spans residues 3913-3925 (GRVYWTNWHTGTI). Asn3954 carries an N-linked (GlcNAc...) asparagine glycan. 3 LDL-receptor class B repeats span residues 3971-4013 (GNVY…DPLR), 4014-4057 (GTMY…DYHN), and 4058-4102 (ERLY…FEDY). Residues 3995-4027 (TLISGMIDEPHAIVVDPLRGTMYWSDWGNHPKI) form an HAT 10 repeat. Asn4076, Asn4126, and Asn4180 each carry an N-linked (GlcNAc...) asparagine glycan. 4 EGF-like domains span residues 4197–4230 (RPGT…YTGD), 4233–4269 (ELDQ…PRCT), 4270–4302 (QQVC…FLGD), and 4305–4341 (QYRQ…TRCE). Cystine bridges form between Cys4201–Cys4211, Cys4205–Cys4221, Cys4237–Cys4247, Cys4241–Cys4257, Cys4259–Cys4268, Cys4273–Cys4283, Cys4277–Cys4293, Cys4309–Cys4319, Cys4313–Cys4329, and Cys4331–Cys4340. Asn4280 carries N-linked (GlcNAc...) asparagine glycosylation. The N-linked (GlcNAc...) asparagine glycan is linked to Asn4365. Residues 4376–4410 (LTCIDHCSNGGSCTMNSKMMPECQCPPHMTGPRCE) enclose the EGF-like 6 domain. 3 cysteine pairs are disulfide-bonded: Cys4378/Cys4388, Cys4382/Cys4398, and Cys4400/Cys4409. A helical transmembrane segment spans residues 4425 to 4445 (ILIPLLLLLLLLLVAGVVFWY). Residues 4446–4545 (KRRVRGAKGF…PEDEIGDPLA (100 aa)) lie on the Cytoplasmic side of the membrane. Residues 4446 to 4545 (KRRVRGAKGF…PEDEIGDPLA (100 aa)) are interaction with MAFB. A Phosphothreonine modification is found at Thr4461. Position 4508 is a phosphotyrosine (Tyr4508). 3 positions are modified to phosphoserine: Ser4518, Ser4521, and Ser4524.

The protein belongs to the LDLR family. Heterodimer of an 85-kDa membrane-bound carboxyl subunit and a non-covalently attached 515-kDa N-terminal subunit. Intracellular domain interacts with MAFB. Found in a complex with PID1/PCLI1, LRP1 and CUBNI. Interacts with SNX17, PID1/PCLI1, PDGF and CUBN. The intracellular domain interacts with SHC1, GULP1 and DAB1. Can weakly interact (via NPXY motif) with DAB2 (via PID domain); the interaction is enhanced by tyrosine phosphorylation of the NPXY motif. Interacts with MDK; promotes neuronal survival. Interacts with LRPAP1; this interaction is followed by rapid internalization. Interacts with uPA/PLAU and PAI1/SERPINE1, either individually or in complex with each other, leading to rapid endocytosis; this interaction is abolished in the presence of LRPAP1/RAP. Also interacts with tPA/PLAT alone or in complex with SERPINE1. Interacts with the urokinase receptor PLAUR; this interaction leads to PLAUR internalization and is impaired in the presence of SORL1. Interacts with PDGFB. Interacts with TAU/MAPT, leading to endocytosis; this interaction is reduced in the presence of LRPAP1/RAP. Interacts with IGFBP3. Interacts with ADGRG6. Cleaved into a 85 kDa membrane-spanning subunit (LRP-85) and a 515 kDa large extracellular domain (LRP-515) that remains non-covalently associated. Gamma-secretase-dependent cleavage of LRP-85 releases the intracellular domain from the membrane. In terms of processing, phosphorylated on serine and threonine residues. Post-translationally, phosphorylated on tyrosine residues upon stimulation with PDGF. Tyrosine phosphorylation promotes interaction with SHC1.

Its subcellular location is the cell membrane. It localises to the membrane. It is found in the coated pit. The protein localises to the golgi outpost. The protein resides in the cytoplasm. Its subcellular location is the cytoskeleton. It localises to the microtubule organizing center. It is found in the nucleus. In terms of biological role, endocytic receptor involved in endocytosis and in phagocytosis of apoptotic cells. Required for early embryonic development. Involved in cellular lipid homeostasis. Involved in the plasma clearance of chylomicron remnants and activated LRPAP1 (alpha 2-macroglobulin), as well as the local metabolism of complexes between plasminogen activators and their endogenous inhibitors. Acts as an LRPAP1 alpha-2-macroglobulin receptor. Acts as a TAU/MAPT receptor and controls the endocytosis of TAU/MAPT as well as its subsequent spread. May modulate cellular events, such as APP metabolism, kinase-dependent intracellular signaling, neuronal calcium signaling as well as neurotransmission. Also acts as a receptor for IGFBP3 to mediate cell growth inhibition. This Rattus norvegicus (Rat) protein is Prolow-density lipoprotein receptor-related protein 1.